The primary structure comprises 301 residues: Pantothenate synthetase (301 aa).

Residue 30-37 (MGNLHEGH) coordinates ATP. Histidine 37 (proton donor) is an active-site residue. A (R)-pantoate-binding site is contributed by glutamine 61. Glutamine 61 contacts beta-alanine. 149-152 (GEKD) provides a ligand contact to ATP. Glutamine 155 contributes to the (R)-pantoate binding site. Residues valine 178 and 186–189 (MSSR) each bind ATP.

Belongs to the pantothenate synthetase family. Homodimer.

Its subcellular location is the cytoplasm. It catalyses the reaction (R)-pantoate + beta-alanine + ATP = (R)-pantothenate + AMP + diphosphate + H(+). It functions in the pathway cofactor biosynthesis; (R)-pantothenate biosynthesis; (R)-pantothenate from (R)-pantoate and beta-alanine: step 1/1. Functionally, catalyzes the condensation of pantoate with beta-alanine in an ATP-dependent reaction via a pantoyl-adenylate intermediate. This is Pantothenate synthetase from Vibrio vulnificus (strain YJ016).